Consider the following 242-residue polypeptide: MTEITDRYFNDVIARLSGLRDRLAAQMEKAADLIAAAARADRRVYVFGTGHSHMMAEELHYRAGGLAITVPILCGSIMLQDGAVASSHFERIEGAVRPILDRYGIRDGDVLVVVSNSGVNAAPIEAARYAREKGAAIIALTSVAYSNTIARGRTQLLSLADVVLDNDAPSGDAVLEIAGSALKVGPVSTALGVTILNAVFADVAARLVGEGDAPIYLSANMPGSGDINRSLVERYRDRNPHL.

An SIS domain is found at 30–214; the sequence is AADLIAAAAR…ARLVGEGDAP (185 aa).

Belongs to the UPF0309 family.

The protein is UPF0309 protein BMEA_B0892 of Brucella melitensis biotype 2 (strain ATCC 23457).